The following is a 272-amino-acid chain: 3-methyl-2-oxobutanoate hydroxymethyltransferase (272 aa).

Residues aspartate 54 and aspartate 93 each contribute to the Mg(2+) site. Residues 54 to 55 (DS), aspartate 93, and lysine 121 contribute to the 3-methyl-2-oxobutanoate site. Position 123 (glutamate 123) interacts with Mg(2+). Glutamate 190 serves as the catalytic Proton acceptor.

It belongs to the PanB family. In terms of assembly, homodecamer; pentamer of dimers. Mg(2+) is required as a cofactor.

It localises to the cytoplasm. It catalyses the reaction 3-methyl-2-oxobutanoate + (6R)-5,10-methylene-5,6,7,8-tetrahydrofolate + H2O = 2-dehydropantoate + (6S)-5,6,7,8-tetrahydrofolate. Its pathway is cofactor biosynthesis; (R)-pantothenate biosynthesis; (R)-pantoate from 3-methyl-2-oxobutanoate: step 1/2. Catalyzes the reversible reaction in which hydroxymethyl group from 5,10-methylenetetrahydrofolate is transferred onto alpha-ketoisovalerate to form ketopantoate. The polypeptide is 3-methyl-2-oxobutanoate hydroxymethyltransferase (Janthinobacterium sp. (strain Marseille) (Minibacterium massiliensis)).